Consider the following 302-residue polypeptide: Sulfate adenylyltransferase subunit 2 (302 aa).

The tract at residues Arg280–Phe302 is disordered.

The protein belongs to the PAPS reductase family. CysD subfamily. In terms of assembly, heterodimer composed of CysD, the smaller subunit, and CysN.

The catalysed reaction is sulfate + ATP + H(+) = adenosine 5'-phosphosulfate + diphosphate. Its pathway is sulfur metabolism; hydrogen sulfide biosynthesis; sulfite from sulfate: step 1/3. In terms of biological role, with CysN forms the ATP sulfurylase (ATPS) that catalyzes the adenylation of sulfate producing adenosine 5'-phosphosulfate (APS) and diphosphate, the first enzymatic step in sulfur assimilation pathway. APS synthesis involves the formation of a high-energy phosphoric-sulfuric acid anhydride bond driven by GTP hydrolysis by CysN coupled to ATP hydrolysis by CysD. The chain is Sulfate adenylyltransferase subunit 2 from Hahella chejuensis (strain KCTC 2396).